Consider the following 124-residue polypeptide: Large ribosomal subunit protein uL22 (124 aa).

It belongs to the universal ribosomal protein uL22 family. In terms of assembly, part of the 50S ribosomal subunit.

Functionally, this protein binds specifically to 23S rRNA; its binding is stimulated by other ribosomal proteins, e.g. L4, L17, and L20. It is important during the early stages of 50S assembly. It makes multiple contacts with different domains of the 23S rRNA in the assembled 50S subunit and ribosome. In terms of biological role, the globular domain of the protein is located near the polypeptide exit tunnel on the outside of the subunit, while an extended beta-hairpin is found that lines the wall of the exit tunnel in the center of the 70S ribosome. The polypeptide is Large ribosomal subunit protein uL22 (Campylobacter lari (strain RM2100 / D67 / ATCC BAA-1060)).